We begin with the raw amino-acid sequence, 180 residues long: Adenine phosphoribosyltransferase (180 aa).

This sequence belongs to the purine/pyrimidine phosphoribosyltransferase family. In terms of assembly, homodimer.

The protein localises to the cytoplasm. It carries out the reaction AMP + diphosphate = 5-phospho-alpha-D-ribose 1-diphosphate + adenine. It functions in the pathway purine metabolism; AMP biosynthesis via salvage pathway; AMP from adenine: step 1/1. Catalyzes a salvage reaction resulting in the formation of AMP, that is energically less costly than de novo synthesis. The chain is Adenine phosphoribosyltransferase from Rhizobium johnstonii (strain DSM 114642 / LMG 32736 / 3841) (Rhizobium leguminosarum bv. viciae).